Consider the following 469-residue polypeptide: Keratin, type I cytoskeletal 26 (469 aa).

Residues 1 to 82 form a head region; that stretch reads MSFRLSSGSR…ENEHGLLPGN (82 aa). Residues 83–118 form a coil 1A region; the sequence is EKVTLQNLNDRLASYLDHVCTLEEANADLEQKIKGW. The 316-residue stretch at 83 to 398 folds into the IF rod domain; that stretch reads EKVTLQNLND…KLIDGEGRKS (316 aa). The linker 1 stretch occupies residues 119–140; the sequence is YEKYGPGSGRQLAYDCSKYFSV. Residues 141–232 form a coil 1B region; the sequence is TEDLKRQIIS…KNHQEEMKVM (92 aa). A linker 12 region spans residues 233–255; it reads QGAAGGNVNVEINAAPGVDLTVL. The tract at residues 256-394 is coil 2; that stretch reads LNNMRAEYED…EMYCKLIDGE (139 aa). Positions 395 to 465 are tail; the sequence is GRKSKSTYCK…NITMEQRLPS (71 aa). Disordered regions lie at residues 398–421 and 450–469; these read SKST…KDSK and KSSK…KVPQ. The span at 405-421 shows a compositional bias: basic and acidic residues; it reads SEGRGPKNSENQVKDSK.

The protein belongs to the intermediate filament family. In terms of assembly, heterotetramer of two type I and two type II keratins.

In Bos taurus (Bovine), this protein is Keratin, type I cytoskeletal 26.